A 591-amino-acid chain; its full sequence is Aspartate--tRNA(Asp/Asn) ligase (591 aa).

Glu-174 is a binding site for L-aspartate. An aspartate region spans residues 198 to 201 (QLFK). Arg-220 is a binding site for L-aspartate. Residues 220-222 (RDE) and Gln-229 each bind ATP. An L-aspartate-binding site is contributed by His-450. Glu-483 is an ATP binding site. An L-aspartate-binding site is contributed by Arg-490. 535–538 (GLDR) provides a ligand contact to ATP.

This sequence belongs to the class-II aminoacyl-tRNA synthetase family. Type 1 subfamily. As to quaternary structure, homodimer.

The protein localises to the cytoplasm. The catalysed reaction is tRNA(Asx) + L-aspartate + ATP = L-aspartyl-tRNA(Asx) + AMP + diphosphate. In terms of biological role, aspartyl-tRNA synthetase with relaxed tRNA specificity since it is able to aspartylate not only its cognate tRNA(Asp) but also tRNA(Asn). Reaction proceeds in two steps: L-aspartate is first activated by ATP to form Asp-AMP and then transferred to the acceptor end of tRNA(Asp/Asn). The sequence is that of Aspartate--tRNA(Asp/Asn) ligase from Pseudomonas fluorescens (strain SBW25).